The primary structure comprises 343 residues: MKIKALSKLKPEEGIWMTEVDKPVLGHNDLLIKIKKTAICGTDVHIYNWDEWSQKTIPVPMVVGHEYVGEVVGIGQEVRGFEIGDRVSGEGHITCGHCRNCRGGRTHLCRNTIGVGVNRTGCFSEYLVIPAFNAFKIPANISDDLASIFDPFGNAVHTALSFDLVGEDVLITGAGPIGIMAAAVAKHVGARHVVITDVNEYRLDLARKMGVTRAVNVAEQKLDDVMVELGMTEGFDVGLEMSGNPSAFNSMLKTMNHGGRIALLGIPPSDMGIDWNQVIFKGLVIKGIYGREMFETWYKMASLIQSGLDLTPIITHHFKVDDFQQGFDIMRSGMSGKVILDWE.

Cysteine 40 is a binding site for Zn(2+). Active-site charge relay system residues include threonine 42 and histidine 45. Histidine 65, glutamate 66, cysteine 95, cysteine 98, cysteine 101, and cysteine 109 together coordinate Zn(2+). NAD(+) contacts are provided by residues isoleucine 177, aspartate 197, arginine 202, 264 to 266 (LGI), and 288 to 289 (IY).

This sequence belongs to the zinc-containing alcohol dehydrogenase family. In terms of assembly, homotetramer. Requires Zn(2+) as cofactor.

It localises to the cytoplasm. It catalyses the reaction L-threonine + NAD(+) = (2S)-2-amino-3-oxobutanoate + NADH + H(+). It participates in amino-acid degradation; L-threonine degradation via oxydo-reductase pathway; glycine from L-threonine: step 1/2. Catalyzes the NAD(+)-dependent oxidation of L-threonine to 2-amino-3-ketobutyrate. In Vibrio vulnificus (strain YJ016), this protein is L-threonine 3-dehydrogenase.